Consider the following 320-residue polypeptide: Ferrochelatase (320 aa).

H194 and E275 together coordinate Fe cation.

This sequence belongs to the ferrochelatase family.

Its subcellular location is the cytoplasm. It catalyses the reaction heme b + 2 H(+) = protoporphyrin IX + Fe(2+). Its pathway is porphyrin-containing compound metabolism; protoheme biosynthesis; protoheme from protoporphyrin-IX: step 1/1. In terms of biological role, catalyzes the ferrous insertion into protoporphyrin IX. This is Ferrochelatase from Vibrio parahaemolyticus serotype O3:K6 (strain RIMD 2210633).